The sequence spans 694 residues: Glycine--tRNA ligase beta subunit (694 aa).

It belongs to the class-II aminoacyl-tRNA synthetase family. In terms of assembly, tetramer of two alpha and two beta subunits.

The protein resides in the cytoplasm. It carries out the reaction tRNA(Gly) + glycine + ATP = glycyl-tRNA(Gly) + AMP + diphosphate. This Acidithiobacillus ferrooxidans (strain ATCC 23270 / DSM 14882 / CIP 104768 / NCIMB 8455) (Ferrobacillus ferrooxidans (strain ATCC 23270)) protein is Glycine--tRNA ligase beta subunit.